Reading from the N-terminus, the 180-residue chain is MKILRIIQGVGTQLRSLSMVFSHAWHPRETLNYPEEAVYAAPRYRGRIVLTRDPDGDERCVACNLCAVACPVGCISLQKSERDDGRWYPEFFRINFSRCIFCGLCEEACPTTAIQLTPDFEMGEYRRQDLVYEKEDLLISGPGKYPDYNFYRMSGMAIDGKPKGDAENEAKPIDVKSLLP.

4Fe-4S ferredoxin-type domains are found at residues 48-80 (IVLTRDPDGDERCVACNLCAVACPVGCISLQKS) and 90-119 (EFFRINFSRCIFCGLCEEACPTTAIQLTPD). Cys60, Cys63, Cys66, Cys70, Cys99, Cys102, Cys105, and Cys109 together coordinate [4Fe-4S] cluster. Residues 161-174 (KPKGDAENEAKPID) are compositionally biased toward basic and acidic residues. The disordered stretch occupies residues 161-180 (KPKGDAENEAKPIDVKSLLP).

The protein belongs to the complex I 23 kDa subunit family. NDH-1 is composed of 13 different subunits. Subunits NuoA, H, J, K, L, M, N constitute the membrane sector of the complex. [4Fe-4S] cluster is required as a cofactor.

It localises to the cell inner membrane. The catalysed reaction is a quinone + NADH + 5 H(+)(in) = a quinol + NAD(+) + 4 H(+)(out). NDH-1 shuttles electrons from NADH, via FMN and iron-sulfur (Fe-S) centers, to quinones in the respiratory chain. The immediate electron acceptor for the enzyme in this species is believed to be ubiquinone. Couples the redox reaction to proton translocation (for every two electrons transferred, four hydrogen ions are translocated across the cytoplasmic membrane), and thus conserves the redox energy in a proton gradient. The chain is NADH-quinone oxidoreductase subunit I from Shewanella oneidensis (strain ATCC 700550 / JCM 31522 / CIP 106686 / LMG 19005 / NCIMB 14063 / MR-1).